The following is a 182-amino-acid chain: Putative manganese efflux pump MntP (182 aa).

The next 6 membrane-spanning stretches (helical) occupy residues 7–27 (IISIILLAIGLSMDGFSVSLG), 38–58 (IAYIGLTIGFLHMLMPLAGML), 71–91 (TSFAGGVLLFLIGAHMFFSAF), 106–126 (LWIIAFSVSLDSFTVGLGLGI), 131–151 (IFVTLFAFGIVSCFLTWLGML), and 159–179 (FLGVYSELLGGSILCGFGIFI).

This sequence belongs to the MntP (TC 9.B.29) family.

The protein localises to the cell membrane. Probably functions as a manganese efflux pump. This is Putative manganese efflux pump MntP from Oceanobacillus iheyensis (strain DSM 14371 / CIP 107618 / JCM 11309 / KCTC 3954 / HTE831).